The following is a 148-amino-acid chain: Large ribosomal subunit protein uL15 (148 aa).

Residues 1–40 (MADILQMHDLKPAPGANKDRIRVGRGEGSKGKTSGRGDKG) show a composition bias toward basic and acidic residues. Residues 1–47 (MADILQMHDLKPAPGANKDRIRVGRGEGSKGKTSGRGDKGTKKRYQV) form a disordered region.

This sequence belongs to the universal ribosomal protein uL15 family. In terms of assembly, part of the 50S ribosomal subunit.

Binds to the 23S rRNA. In Bifidobacterium adolescentis (strain ATCC 15703 / DSM 20083 / NCTC 11814 / E194a), this protein is Large ribosomal subunit protein uL15.